The sequence spans 364 residues: Coproporphyrin III ferrochelatase (364 aa).

Positions 29 and 118 each coordinate Fe-coproporphyrin III. The Fe(2+) site is built by H169 and E250.

This sequence belongs to the ferrochelatase family.

It is found in the cytoplasm. It carries out the reaction Fe-coproporphyrin III + 2 H(+) = coproporphyrin III + Fe(2+). It functions in the pathway porphyrin-containing compound metabolism; protoheme biosynthesis. Functionally, involved in coproporphyrin-dependent heme b biosynthesis. Catalyzes the insertion of ferrous iron into coproporphyrin III to form Fe-coproporphyrin III. This is Coproporphyrin III ferrochelatase from Streptococcus pneumoniae (strain ATCC 700669 / Spain 23F-1).